The chain runs to 2293 residues: Protein Ycf2 (2293 aa).

1642–1649 is a binding site for ATP; the sequence is GSIGTGRS.

The protein belongs to the Ycf2 family.

It is found in the plastid. The protein resides in the chloroplast stroma. Probable ATPase of unknown function. Its presence in a non-photosynthetic plant (Epifagus virginiana) and experiments in tobacco indicate that it has an essential function which is probably not related to photosynthesis. This Platanus occidentalis (Sycamore) protein is Protein Ycf2.